A 100-amino-acid chain; its full sequence is Small ribosomal subunit protein uS14c (100 aa).

Belongs to the universal ribosomal protein uS14 family. As to quaternary structure, part of the 30S ribosomal subunit.

The protein resides in the plastid. The protein localises to the chloroplast. Its function is as follows. Binds 16S rRNA, required for the assembly of 30S particles. The sequence is that of Small ribosomal subunit protein uS14c from Glycine max (Soybean).